We begin with the raw amino-acid sequence, 109 residues long: U-scoloptoxin(16)-Ssd1a (109 aa).

An N-terminal signal peptide occupies residues 1–23 (MTTSATVIIMVLCVGSLVIFSEG).

In terms of processing, contains 4 disulfide bonds. Expressed by the venom gland.

The protein resides in the secreted. The sequence is that of U-scoloptoxin(16)-Ssd1a from Scolopendra dehaani (Thai centipede).